Consider the following 34-residue polypeptide: Unknown protein 5 (34 aa).

The polypeptide is Unknown protein 5 (Pseudotsuga menziesii (Douglas-fir)).